Reading from the N-terminus, the 203-residue chain is Putative B3 domain-containing protein At1g50220 (203 aa).

The TF-B3 DNA-binding region spans 99–195 (DIVGNVALPK…KFIVLNFQHK (97 aa)).

It is found in the nucleus. The chain is Putative B3 domain-containing protein At1g50220 from Arabidopsis thaliana (Mouse-ear cress).